Reading from the N-terminus, the 277-residue chain is 14-3-3 protein (277 aa).

The interval 252–277 is disordered; that stretch reads LQTQEQQQQPVGEGAEAPKVEATEQQ. Over residues 267 to 277 the composition is skewed to basic and acidic residues; it reads EAPKVEATEQQ.

This sequence belongs to the 14-3-3 family.

The sequence is that of 14-3-3 protein from Eimeria tenella (Coccidian parasite).